Reading from the N-terminus, the 119-residue chain is uncharacterized protein (119 aa).

This is an uncharacterized protein from Aquifex aeolicus (strain VF5).